A 359-amino-acid chain; its full sequence is MAKLLDIVKPGVVTGEDVQKVFAYAKEHNFAIPAVNCVGSDSVNAVLETAARVKAPVIIQFSNGGAAFYAGKGIKPTSGTRPDVLGAIAGAKQVHTLAKEYGVPVILHTDHAAKKLLPWIDGLLDAGEKHFAETGRPLFSSHMIDLSEESMEENMAICREYLARMDKMGMTLEIEIGITGGEEDGVDNSDVDESRLYTQPSDVLYVYDQLHPVSPNFTVAAAFGNVHGVYKPGNVKLKPSILGESQEFVSKERNLPAKPINFVFHGGSGSSREEIREAIGYGAIKMNIDTDTQWASWNGILNFYKANEAYLQGQLGNPEGPDAPNKKYYDPRVWLRKMEESMSKRLEQSFEDLNCVDVL.

Ser62 is a D-glyceraldehyde 3-phosphate binding site. Asp110 (proton donor) is an active-site residue. Residues His111, Asp145, Glu175, and His227 each contribute to the Zn(2+) site. Position 228 (Gly228) interacts with dihydroxyacetone phosphate. His265 is a binding site for Zn(2+). Residues 266–268 (GGS) and 287–290 (NIDT) each bind dihydroxyacetone phosphate.

This sequence belongs to the class II fructose-bisphosphate aldolase family. Homodimer. Zn(2+) is required as a cofactor.

It carries out the reaction beta-D-fructose 1,6-bisphosphate = D-glyceraldehyde 3-phosphate + dihydroxyacetone phosphate. Its pathway is carbohydrate degradation; glycolysis; D-glyceraldehyde 3-phosphate and glycerone phosphate from D-glucose: step 4/4. Its function is as follows. Catalyzes the aldol condensation of dihydroxyacetone phosphate (DHAP or glycerone-phosphate) with glyceraldehyde 3-phosphate (G3P) to form fructose 1,6-bisphosphate (FBP) in gluconeogenesis and the reverse reaction in glycolysis. This is Fructose-bisphosphate aldolase (fba) from Haemophilus influenzae (strain ATCC 51907 / DSM 11121 / KW20 / Rd).